A 572-amino-acid polypeptide reads, in one-letter code: Serine/threonine-protein kinase pak-1 (572 aa).

Disordered regions lie at residues 1-71 and 156-195; these read MKAF…SRPS and QPYS…QGVP. Positions 67-80 constitute a CRIB domain; that stretch reads ISRPSNFEHTIHVG. Residues 81–294 are linker; the sequence is YDPKTGEFTG…IVSIGNPDRK (214 aa). Over residues 178–195 the composition is skewed to polar residues; it reads PMTTSTSSAGYNSKQGVP. In terms of domain architecture, Protein kinase spans 295 to 546; the sequence is YRKVDKIGSG…ASQLLTHPFL (252 aa). Residues 301 to 309 and Lys-324 each bind ATP; that span reads IGSGASGSV. Catalysis depends on Asp-414, which acts as the Proton acceptor.

The protein belongs to the protein kinase superfamily. STE Ser/Thr protein kinase family. STE20 subfamily. In terms of assembly, interacts with cdc-42 (GTP-bound form) and cedd-10 (GTP-bound form). Mg(2+) serves as cofactor. The cofactor is Mn(2+). Specifically colocalized with cdc-42 and ced-10 at all hypodermal cell boundaries during embryo elongation throughout the second phase of embryogenesis. Expressed mainly in pharyngeal muscles, the CAN neurons, motor neurons in the ventral nerve cord, several cells in the tail region (including the B and Y cells from L1 to adult, the hypodermal blast cell T in the L1 and some of its progeny in later stages), and the distal tip cells.

The protein resides in the cell membrane. It localises to the cytoplasm. The protein localises to the cell projection. It is found in the axon. Its subcellular location is the perikaryon. The catalysed reaction is L-seryl-[protein] + ATP = O-phospho-L-seryl-[protein] + ADP + H(+). The enzyme catalyses L-threonyl-[protein] + ATP = O-phospho-L-threonyl-[protein] + ADP + H(+). Required for hypodermal cell fusion, together with cdc-42 and ced-10, leading to embryonic body elongation, which involves dramatic cytoskeletal reorganization. Plays a redundant role with max-2 in dorsal axonal guidance in ventral cord commissural motoneurons and in P neuroblast migration. Acts probably downstream of Rho GTPases mig-2 and ced-10 to regulate these 2 processes. Involved in orientating axonal growth of HSN neurons. During gonad morphogenesis and probably in association with pix-1 and git-1, involved in the migration of distal tip cell (DTC) and in maintaining their sharp tapering morphology. In addition, plays a redundant role with max-2 in DTC-mediated guidance of gonad elongation. May phosphorylate mlc-4. The polypeptide is Serine/threonine-protein kinase pak-1 (pak-1) (Caenorhabditis elegans).